A 150-amino-acid chain; its full sequence is UPF0756 membrane protein Dd703_1075 (150 aa).

The next 4 helical transmembrane spans lie at 8–28 (LLIL…TITL), 51–71 (YGLS…IASG), 81–101 (AFLN…SWLG), and 114–134 (VVAG…GVPV).

It belongs to the UPF0756 family.

Its subcellular location is the cell membrane. The chain is UPF0756 membrane protein Dd703_1075 from Musicola paradisiaca (strain Ech703) (Dickeya paradisiaca).